The following is a 219-amino-acid chain: MSEQEAQAPGGRGLPPDMLAEQVELWWSQQPRRSALCFVVAVGLVAGCGAGGVALLSTTSSRSGEWRLATGTVLCLLALLVLVKQLMSSAVQDMNCIRQAHHVALLRSGGGADALVVLLSGLVLLVTGLTLAGLAAAPAPARPLAAMLSVGIALAALGSLLLLGLLLYQVGVSGHCPSICMATPSTHSGHGGHGSIFSISGQLSAGRRHETTSSIASLI.

Helical transmembrane passes span 36–56, 68–88, 114–134, and 147–167; these read LCFV…VALL, LATG…QLMS, ALVV…LAGL, and MLSV…GLLL.

It localises to the membrane. The protein is Transmembrane protein 125 (TMEM125) of Homo sapiens (Human).